A 44-amino-acid chain; its full sequence is uncharacterized protein (44 aa).

This is an uncharacterized protein from Bacillus subtilis (Bacteriophage phi-105).